A 209-amino-acid polypeptide reads, in one-letter code: Ribosomal RNA small subunit methyltransferase G (209 aa).

Residues G72, L77, 123–124, and R138 each bind S-adenosyl-L-methionine; that span reads AE.

The protein belongs to the methyltransferase superfamily. RNA methyltransferase RsmG family.

The protein localises to the cytoplasm. Functionally, specifically methylates the N7 position of guanine in position 518 of 16S rRNA. This Leifsonia xyli subsp. xyli (strain CTCB07) protein is Ribosomal RNA small subunit methyltransferase G.